We begin with the raw amino-acid sequence, 602 residues long: Elongation factor 4 (602 aa).

A tr-type G domain is found at 6 to 188; sequence DHIRNFSIVA…AIVNKLPAPK (183 aa). Residues 18–23 and 135–138 each bind GTP; these read DHGKST and NKID.

Belongs to the TRAFAC class translation factor GTPase superfamily. Classic translation factor GTPase family. LepA subfamily.

The protein resides in the cell inner membrane. It catalyses the reaction GTP + H2O = GDP + phosphate + H(+). Functionally, required for accurate and efficient protein synthesis under certain stress conditions. May act as a fidelity factor of the translation reaction, by catalyzing a one-codon backward translocation of tRNAs on improperly translocated ribosomes. Back-translocation proceeds from a post-translocation (POST) complex to a pre-translocation (PRE) complex, thus giving elongation factor G a second chance to translocate the tRNAs correctly. Binds to ribosomes in a GTP-dependent manner. In Brucella abortus (strain 2308), this protein is Elongation factor 4.